A 738-amino-acid polypeptide reads, in one-letter code: Polyphosphate kinase (738 aa).

Residues 1-48 are disordered; the sequence is MIGNDRWVTEIETGPVTEARPDTNAREPGDRTPAAPPAATPAATTDQL. Residues 19–30 are compositionally biased toward basic and acidic residues; that stretch reads ARPDTNAREPGD. Residue asparagine 91 participates in ATP binding. The Mg(2+) site is built by arginine 427 and arginine 457. The active-site Phosphohistidine intermediate is the histidine 487. ATP contacts are provided by tyrosine 520, arginine 620, and histidine 648.

The protein belongs to the polyphosphate kinase 1 (PPK1) family. The cofactor is Mg(2+). In terms of processing, an intermediate of this reaction is the autophosphorylated ppk in which a phosphate is covalently linked to a histidine residue through a N-P bond.

The catalysed reaction is [phosphate](n) + ATP = [phosphate](n+1) + ADP. Catalyzes the reversible transfer of the terminal phosphate of ATP to form a long-chain polyphosphate (polyP). This is Polyphosphate kinase from Mycobacterium ulcerans (strain Agy99).